We begin with the raw amino-acid sequence, 146 residues long: Hemoglobin subunit beta (146 aa).

The Globin domain occupies 2-146; it reads HWTAEEKQLI…VAHALARKYH (145 aa). Residues histidine 63 and histidine 92 each contribute to the heme b site.

The protein belongs to the globin family. As to quaternary structure, heterotetramer of two alpha chains and two beta chains. Red blood cells.

Involved in oxygen transport from the lung to the various peripheral tissues. This Ciconia ciconia (White stork) protein is Hemoglobin subunit beta (HBB).